The sequence spans 25 residues: C-type natriuretic peptide (25 aa).

Cysteine 9 and cysteine 25 are oxidised to a cystine.

In terms of tissue distribution, venom gland.

Its subcellular location is the secreted. Its function is as follows. Snake venom natriuretic peptide that has a vasorelaxant activity in rat aortic strips and a diuretic potency in anesthetized rats. May act by activating natriuretic receptors (NPR1 and/or NPR2). This chain is C-type natriuretic peptide, found in Crotalus atrox (Western diamondback rattlesnake).